Here is a 260-residue protein sequence, read N- to C-terminus: Ubiquinone/menaquinone biosynthesis C-methyltransferase UbiE (260 aa).

Residues Thr83, Asp104, 132 to 133, and Ser149 each bind S-adenosyl-L-methionine; that span reads NA.

This sequence belongs to the class I-like SAM-binding methyltransferase superfamily. MenG/UbiE family.

The enzyme catalyses a 2-demethylmenaquinol + S-adenosyl-L-methionine = a menaquinol + S-adenosyl-L-homocysteine + H(+). It catalyses the reaction a 2-methoxy-6-(all-trans-polyprenyl)benzene-1,4-diol + S-adenosyl-L-methionine = a 5-methoxy-2-methyl-3-(all-trans-polyprenyl)benzene-1,4-diol + S-adenosyl-L-homocysteine + H(+). The protein operates within quinol/quinone metabolism; menaquinone biosynthesis; menaquinol from 1,4-dihydroxy-2-naphthoate: step 2/2. It functions in the pathway cofactor biosynthesis; ubiquinone biosynthesis. Functionally, methyltransferase required for the conversion of demethylmenaquinol (DMKH2) to menaquinol (MKH2) and the conversion of 2-polyprenyl-6-methoxy-1,4-benzoquinol (DDMQH2) to 2-polyprenyl-3-methyl-6-methoxy-1,4-benzoquinol (DMQH2). This Vibrio vulnificus (strain CMCP6) protein is Ubiquinone/menaquinone biosynthesis C-methyltransferase UbiE.